The following is a 344-amino-acid chain: Uroporphyrinogen decarboxylase (344 aa).

Residues 26–30 (RQAGR), Phe45, Asp75, Tyr151, Ser206, and His320 contribute to the substrate site.

It belongs to the uroporphyrinogen decarboxylase family. Homodimer.

The protein resides in the cytoplasm. The enzyme catalyses uroporphyrinogen III + 4 H(+) = coproporphyrinogen III + 4 CO2. The protein operates within porphyrin-containing compound metabolism; protoporphyrin-IX biosynthesis; coproporphyrinogen-III from 5-aminolevulinate: step 4/4. Its function is as follows. Catalyzes the decarboxylation of four acetate groups of uroporphyrinogen-III to yield coproporphyrinogen-III. The sequence is that of Uroporphyrinogen decarboxylase from Staphylococcus saprophyticus subsp. saprophyticus (strain ATCC 15305 / DSM 20229 / NCIMB 8711 / NCTC 7292 / S-41).